The primary structure comprises 738 residues: Protein Aster-B (738 aa).

The segment at 1-81 (MKGFKLSCTA…SGGKNSKKSQ (81 aa)) is disordered. Positions 8 to 19 (CTASNSNRSTPA) are enriched in polar residues. Ser28 and Ser30 each carry phosphoserine. The segment covering 41–51 (MVEKGSDHSSD) has biased composition (basic and acidic residues). Residues 59–70 (QGVQRSCSSQSG) show a composition bias toward low complexity. The 68-residue stretch at 96-163 (EDFRKLFKQL…KDICSMTKEK (68 aa)) folds into the GRAM domain. Positions 254-301 (EENEVNDSSSKSSIETKPDASPQLPKKSITNSTLTSTGSSEAPVSFDG) are disordered. Residues 259–268 (NDSSSKSSIE) show a composition bias toward polar residues. Residue Ser274 is modified to Phosphoserine. A compositionally biased stretch (polar residues) spans 281–295 (SITNSTLTSTGSSEA). In terms of domain architecture, VASt spans 372-543 (SGRQYVNEVF…ELAKTESTYL (172 aa)). At Tyr389 the chain carries Phosphotyrosine. The interval 544-566 (AEMHRQSPKEKASKTTTVRRRKR) is disordered. Positions 545 to 556 (EMHRQSPKEKAS) are enriched in basic and acidic residues. A phosphoserine mark is found at Ser550 and Ser581. 3 positions are modified to phosphothreonine: Thr584, Thr585, and Thr587. A helical transmembrane segment spans residues 623 to 643 (LLLVISCVICFSLVLLVILNM).

The protein resides in the endoplasmic reticulum membrane. Its subcellular location is the cell membrane. In terms of biological role, cholesterol transporter that mediates non-vesicular transport of cholesterol from the plasma membrane (PM) to the endoplasmic reticulum (ER). Contains unique domains for binding cholesterol and the PM, thereby serving as a molecular bridge for the transfer of cholesterol from the PM to the ER. Plays a crucial role in cholesterol homeostasis in the adrenal gland and has the unique ability to localize to the PM based on the level of membrane cholesterol. In lipid-poor conditions localizes to the ER membrane and in response to excess cholesterol in the PM is recruited to the endoplasmic reticulum-plasma membrane contact sites (EPCS) which is mediated by the GRAM domain. At the EPCS, the sterol-binding VASt/ASTER domain binds to the cholesterol in the PM and facilitates its transfer from the PM to ER. This is Protein Aster-B (GRAMD1B) from Homo sapiens (Human).